A 623-amino-acid chain; its full sequence is MAFEALTGINGDLITRSWSASKQAYLTERYHKEEAGAVVIFAFQPSFSEKDFFDPDNKSSFGEIKLNRVQFPCMRKIGKGDVATVNEAFLKNLEAIIDPRTSFQASVEMAVRSRKQIVFTGHSSGGATAILATVWYLEKYFIRNPNVYLEPRCVTFGAPLVGDSIFSHALGREKWSRFFVNFVSRFDIVPRIMLARKASVEETLPHVLAQLDPRKSSVQESEQRITEFYTRVMRDTSTVANQAVCELTGSAEAFLETLSSFLELSPYRPAGTFVFSTEKRLVAVNNSDAILQMLFYTSQASDEQEWSLIPFRSIRDHHSYEELVQSMGKKLFNHLDGENSIESTLNDLGVSTRGRQYVQAALEEEKKRVENQKKIIQVIEQERFLKKLAWIEDEYKPKCQAHKNGYYDSFKVSNEENDFKANVKRAELAGVFDEVLGLMKKCQLPDEFEGDIDWIKLATRYRRLVEPLDIANYHRHLKNEDTGPYMKRGRPTRYIYAQRGYEHYILKPNGMIAEDVFWNKVNGLNLGLQLEEIQETLKNSGSECGSCFWAEVEELKGKPYEEVEVRVKTLEGMLGEWITDGEVDDKEIFLEGSTFRKWWITLPKNHKSHSPLRDYMMDEITDT.

A2 carries the post-translational modification N-acetylalanine. S123 serves as the catalytic Nucleophile. Catalysis depends on charge relay system residues D187 and H317. Residues 358 to 383 adopt a coiled-coil conformation; it reads VQAALEEEKKRVENQKKIIQVIEQER.

As to quaternary structure, homodimer. Interacts with RPS4, RPS6, SNC1, SRFR1, AvrRps4 and HopA1. Part of a nuclear complex made of EDS1, PAD4 and SAG101, that can be redirected to the cytoplasm in the presence of an extranuclear form of EDS1. Interacts (via N-terminus) with PAD4 (via N-terminus). Interacts (via N-terminus) with SAG101. EDS1-SAG101 and EDS1-PAD4 form separate complexes in pathogen-unchallenged cells. Part of a nuclear protein complex made of VICTR, PAD4 and EDS1. Interacts with VICTR.

It is found in the nucleus. Its subcellular location is the cytoplasm. The protein resides in the microsome. Positive regulator of basal resistance and of effector-triggered immunity specifically mediated by TIR-NB-LRR (TNL) resistance proteins. Disruption by bacterial effector of EDS1-TIR-NB-LRR resistance protein interactions constitutes the first step in resistance activation. Acts redundantly with salicylic acid to regulate resistance gene-mediated signaling. Triggers early plant defenses and hypersensitive response independently of PAD4, and then recruits PAD4 to potentiate plant defenses through the accumulation of salicylic acid. Nuclear localization is essential for basal and TNL-conditioned immunity and for reprogramming defense gene expression, while cytoplasmic EDS1 is required to induce a complete immune response. Heterodimerization with PAD4 and/or SGA101 is necessary for TNL-mediated effector-triggered immunity. Contributes to nonhost resistance against E.amylovora. Loss of EDS1-PAD4 interaction compromises basal but not TNL-triggered resistance. Necessary for systemic acquired resistance (SAR) signal generation and perception. Has no direct lipase activity. Putative lipase activity is dispensable for immune functions. This chain is Protein EDS1, found in Arabidopsis thaliana (Mouse-ear cress).